A 103-amino-acid chain; its full sequence is Large ribosomal subunit protein bL21 (103 aa).

The protein belongs to the bacterial ribosomal protein bL21 family. As to quaternary structure, part of the 50S ribosomal subunit. Contacts protein L20.

This protein binds to 23S rRNA in the presence of protein L20. This chain is Large ribosomal subunit protein bL21, found in Serratia proteamaculans (strain 568).